The following is a 163-amino-acid chain: Cyanate hydratase (163 aa).

Residues Arg-103, Glu-106, and Ser-129 contribute to the active site.

It belongs to the cyanase family.

It carries out the reaction cyanate + hydrogencarbonate + 3 H(+) = NH4(+) + 2 CO2. Functionally, catalyzes the reaction of cyanate with bicarbonate to produce ammonia and carbon dioxide. This chain is Cyanate hydratase, found in Talaromyces marneffei (strain ATCC 18224 / CBS 334.59 / QM 7333) (Penicillium marneffei).